The sequence spans 69 residues: Consomatin Be1 (69 aa).

A signal peptide spans 1–22; the sequence is MEMAYWVMVMMMVWITAPLSEG. A propeptide spanning residues 23–57 is cleaved from the precursor; it reads GKLNDVIRALAPDDVTPQFILRSLISRRRSDSDVR. Glutamate 58 is subject to 4-carboxyglutamate. Cysteine 62 and cysteine 67 are disulfide-bonded. Tryptophan 64 carries the D-tryptophan modification. 2 positions are modified to 4-hydroxyproline: proline 68 and proline 69.

The protein belongs to the conotoxin C superfamily. Consomatin family. As to expression, expressed by the venom duct.

The protein localises to the secreted. Moderately activates human somatostatin receptors (SSTR) with a preferential activation of SSTR1 and SSTR4. In vivo, does not cause behavioral changes in mice within a few minutes of intracranial injection, but causes a progressive loss of movement thereafter. Four to five hours after injection, mice recover, even with the highest dose tested. Shows antinociception and antihyperalgesia activities in two mouse models of acute pain, most probably by acting outside the central nervous system. The protein is Consomatin Be1 of Conus betulinus (Beech cone).